Reading from the N-terminus, the 372-residue chain is NAD(P)H-quinone oxidoreductase subunit 1 (372 aa).

A run of 8 helical transmembrane segments spans residues 27 to 47 (IIWLPLPMLLVLVAAVVGVLV), 97 to 117 (ILFTAGPILVLVPVILSWLIV), 128 to 148 (VGIGIFLWIALSSIQPIGLLM), 176 to 196 (LALSVLAIVLMTNSLSTIDIV), 204 to 224 (ILSWNIWRQPVGFIVFWICAL), 266 to 286 (ILSALLVSILYLGGWGFPVPV), 308 to 328 (SIGIVMTVLKAYLLVFIAILL), and 347 to 367 (FLLPISLANLLITAGLKLAFP).

Belongs to the complex I subunit 1 family. In terms of assembly, NDH-1 is composed of at least 11 different subunits.

It is found in the cellular thylakoid membrane. It carries out the reaction a plastoquinone + NADH + (n+1) H(+)(in) = a plastoquinol + NAD(+) + n H(+)(out). It catalyses the reaction a plastoquinone + NADPH + (n+1) H(+)(in) = a plastoquinol + NADP(+) + n H(+)(out). NDH-1 shuttles electrons from an unknown electron donor, via FMN and iron-sulfur (Fe-S) centers, to quinones in the respiratory and/or the photosynthetic chain. The immediate electron acceptor for the enzyme in this species is believed to be plastoquinone. Couples the redox reaction to proton translocation, and thus conserves the redox energy in a proton gradient. The protein is NAD(P)H-quinone oxidoreductase subunit 1 of Prochlorococcus marinus (strain AS9601).